The chain runs to 478 residues: UDP-glycosyltransferase 90A1 (478 aa).

Residues threonine 289, 343–345 (VDQ), 360–368 (HCGWNSAQE), and 382–385 (MAEQ) each bind UDP-alpha-D-glucose.

This sequence belongs to the UDP-glycosyltransferase family.

In Arabidopsis thaliana (Mouse-ear cress), this protein is UDP-glycosyltransferase 90A1 (UGT90A1).